We begin with the raw amino-acid sequence, 410 residues long: LL-diaminopimelate aminotransferase (410 aa).

Substrate-binding residues include Y15 and G42. Residues Y72, 108–109 (AK), Y132, N187, Y218, and 246–248 (SFS) each bind pyridoxal 5'-phosphate. Substrate-binding residues include K109, Y132, and N187. K249 is modified (N6-(pyridoxal phosphate)lysine). Pyridoxal 5'-phosphate contacts are provided by R257 and N292. Residues N292 and R388 each coordinate substrate.

This sequence belongs to the class-I pyridoxal-phosphate-dependent aminotransferase family. LL-diaminopimelate aminotransferase subfamily. Homodimer. Pyridoxal 5'-phosphate is required as a cofactor.

The enzyme catalyses (2S,6S)-2,6-diaminopimelate + 2-oxoglutarate = (S)-2,3,4,5-tetrahydrodipicolinate + L-glutamate + H2O + H(+). It participates in amino-acid biosynthesis; L-lysine biosynthesis via DAP pathway; LL-2,6-diaminopimelate from (S)-tetrahydrodipicolinate (aminotransferase route): step 1/1. Its function is as follows. Involved in the synthesis of meso-diaminopimelate (m-DAP or DL-DAP), required for both lysine and peptidoglycan biosynthesis. Catalyzes the direct conversion of tetrahydrodipicolinate to LL-diaminopimelate. This Picosynechococcus sp. (strain ATCC 27264 / PCC 7002 / PR-6) (Agmenellum quadruplicatum) protein is LL-diaminopimelate aminotransferase.